A 231-amino-acid chain; its full sequence is Large ribosomal subunit protein uL1 (231 aa).

It belongs to the universal ribosomal protein uL1 family. In terms of assembly, part of the 50S ribosomal subunit.

Functionally, binds directly to 23S rRNA. The L1 stalk is quite mobile in the ribosome, and is involved in E site tRNA release. In terms of biological role, protein L1 is also a translational repressor protein, it controls the translation of the L11 operon by binding to its mRNA. This chain is Large ribosomal subunit protein uL1, found in Thiobacillus denitrificans (strain ATCC 25259 / T1).